We begin with the raw amino-acid sequence, 232 residues long: Large ribosomal subunit protein uL1 (232 aa).

The protein belongs to the universal ribosomal protein uL1 family. As to quaternary structure, part of the 50S ribosomal subunit.

Its function is as follows. Binds directly to 23S rRNA. The L1 stalk is quite mobile in the ribosome, and is involved in E site tRNA release. Protein L1 is also a translational repressor protein, it controls the translation of the L11 operon by binding to its mRNA. This is Large ribosomal subunit protein uL1 from Burkholderia lata (strain ATCC 17760 / DSM 23089 / LMG 22485 / NCIMB 9086 / R18194 / 383).